Here is a 284-residue protein sequence, read N- to C-terminus: 3-methyl-2-oxobutanoate hydroxymethyltransferase (284 aa).

2 residues coordinate Mg(2+): Asp-52 and Asp-91. Residues 52-53 (DS), Asp-91, and Lys-121 contribute to the 3-methyl-2-oxobutanoate site. Glu-123 contacts Mg(2+). The active-site Proton acceptor is Glu-191.

The protein belongs to the PanB family. As to quaternary structure, homodecamer; pentamer of dimers. Mg(2+) serves as cofactor.

It localises to the cytoplasm. It carries out the reaction 3-methyl-2-oxobutanoate + (6R)-5,10-methylene-5,6,7,8-tetrahydrofolate + H2O = 2-dehydropantoate + (6S)-5,6,7,8-tetrahydrofolate. The protein operates within cofactor biosynthesis; (R)-pantothenate biosynthesis; (R)-pantoate from 3-methyl-2-oxobutanoate: step 1/2. Its function is as follows. Catalyzes the reversible reaction in which hydroxymethyl group from 5,10-methylenetetrahydrofolate is transferred onto alpha-ketoisovalerate to form ketopantoate. The protein is 3-methyl-2-oxobutanoate hydroxymethyltransferase of Deinococcus radiodurans (strain ATCC 13939 / DSM 20539 / JCM 16871 / CCUG 27074 / LMG 4051 / NBRC 15346 / NCIMB 9279 / VKM B-1422 / R1).